The sequence spans 227 residues: Protein CAP22 (227 aa).

N-linked (GlcNAc...) asparagine glycans are attached at residues N55 and N72. The segment at 143–162 (TTIGGGATPAPTSERSRTSD) is disordered.

The protein resides in the secreted. It localises to the cell wall. The protein is Protein CAP22 (CAP22) of Colletotrichum gloeosporioides (Anthracnose fungus).